A 745-amino-acid chain; its full sequence is Gamma-tubulin complex component 4 (745 aa).

The protein belongs to the TUBGCP family. As to quaternary structure, gamma-tubulin complex is composed of gamma-tubulin and GCP proteins.

It is found in the cytoplasm. It localises to the cytoskeleton. The protein localises to the microtubule organizing center. The protein resides in the spindle. Functionally, gamma-tubulin complex is necessary for microtubule nucleation at the microtubule organizing centers (MTOCs). Its function is as follows. Gamma-tubulin complex is essential for the control of microtubular network remodeling in the course of initiation and development of giant-feeding cells, and for the successful reproduction of nematodes (e.g. Meloidogyne spp.) in their plant hosts. In Arabidopsis thaliana (Mouse-ear cress), this protein is Gamma-tubulin complex component 4 (GCP4).